The following is a 104-amino-acid chain: Nucleoid-associated protein OB0030 (104 aa).

The disordered stretch occupies residues 1–23 (MKGNMNNMMKQMQKMQKKMMQAQ).

It belongs to the YbaB/EbfC family. In terms of assembly, homodimer.

The protein localises to the cytoplasm. It localises to the nucleoid. Binds to DNA and alters its conformation. May be involved in regulation of gene expression, nucleoid organization and DNA protection. In Oceanobacillus iheyensis (strain DSM 14371 / CIP 107618 / JCM 11309 / KCTC 3954 / HTE831), this protein is Nucleoid-associated protein OB0030.